The chain runs to 174 residues: Scytalone dehydratase-like protein Arp1 (174 aa).

Tyr-49 provides a ligand contact to substrate. Active-site residues include His-84 and His-109. Residue Asn-130 participates in substrate binding.

Belongs to the scytalone dehydratase family. Homotrimer. Each subunit contains an active site, located in the central part of the hydrophobic core of the monomer, which functions independently.

Functionally, scytalone dehydratase-like protein; part of the Pks2 gene cluster that mediates the formation of infectious structures (appressoria), enabling these fungi to kill insects faster. The product of the Pks2 gene cluster is different from the one of Pks1 and has still not been identified. The polypeptide is Scytalone dehydratase-like protein Arp1 (Metarhizium majus (strain ARSEF 297)).